The following is a 305-amino-acid chain: Phosphoribosylaminoimidazole-succinocarboxamide synthase (305 aa).

Belongs to the SAICAR synthetase family.

It catalyses the reaction 5-amino-1-(5-phospho-D-ribosyl)imidazole-4-carboxylate + L-aspartate + ATP = (2S)-2-[5-amino-1-(5-phospho-beta-D-ribosyl)imidazole-4-carboxamido]succinate + ADP + phosphate + 2 H(+). The protein operates within purine metabolism; IMP biosynthesis via de novo pathway; 5-amino-1-(5-phospho-D-ribosyl)imidazole-4-carboxamide from 5-amino-1-(5-phospho-D-ribosyl)imidazole-4-carboxylate: step 1/2. The sequence is that of Phosphoribosylaminoimidazole-succinocarboxamide synthase from Tropheryma whipplei (strain TW08/27) (Whipple's bacillus).